The primary structure comprises 640 residues: Threonine--tRNA ligase (640 aa).

Positions 1–61 (MPIITLPNGD…TEDSTLQIIT (61 aa)) constitute a TGS domain. Residues 242–533 (DHRKIGKALD…LIEHYAGFMP (292 aa)) form a catalytic region. Zn(2+) is bound by residues C333, H384, and H510.

The protein belongs to the class-II aminoacyl-tRNA synthetase family. Homodimer. The cofactor is Zn(2+).

It localises to the cytoplasm. The enzyme catalyses tRNA(Thr) + L-threonine + ATP = L-threonyl-tRNA(Thr) + AMP + diphosphate + H(+). Its function is as follows. Catalyzes the attachment of threonine to tRNA(Thr) in a two-step reaction: L-threonine is first activated by ATP to form Thr-AMP and then transferred to the acceptor end of tRNA(Thr). Also edits incorrectly charged L-seryl-tRNA(Thr). The polypeptide is Threonine--tRNA ligase (Acinetobacter baumannii (strain AB0057)).